An 801-amino-acid chain; its full sequence is MWTSGRMSNAKNWLGLGMSLYFWGLMDLTTTVLSDTPTPQGELEALLSDKPQSHQRTKRSWVWNQFFVLEEYTGTDPLYVGKLHSDMDRGDGSIKYILSGEGAGIVFTIDDTTGDIHAIQRLDREERAQYTLRAQALDRRTGRPMEPESEFIIKIQDINDNEPKFLDGPYVATVPEMSPVGTSVIQVTATDADDPTYGNSARVVYSILQGQPYFSVDSKTGVIRTALMNMDREAKEYYEVIIQAKDMGGQLGGLAGTTTVNITLSDVNDNPPRFPQKHYQMSVLESAPISSTVGRVFAKDLDEGINAEMKYTIVDGDGADAFDISTDPNFQVGIITVKKPLSFESKKSYTLKVEGANPHLEMRFLNLGPFQDTTTVHISVEDVDEPPVFEPGFYFVEVPEDVAIGTTIQIISAKDPDVTNNSIRYSIDRSSDPGRFFYVDITTGALMTARPLDREEFSWHNITVLAMEMNNPSQVGSVPVTIKVLDVNDNAPEFPRFYEAFVCENAKAGQLIQTVSAVDQDDPRNGQHFYYSLAPEAANNPNFTIRDNQDNTARILTRRSGFRQQEQSVFHLPILIADSGQPVLSSTGTLTIQVCSCDDDGHVMSCSPEAYMLPVSLSRGALIAILACIFVLLVLVLLILSMRRHRKQPYIIDDEENIHENIVRYDDEGGGEEDTEAFDIAAMWNPREAQAGAAPKTRQDMLPEIESLSRYVPQTCAVNSTVHSYVLAKLYEADMDLWAPPFDSLQTYMFEGDGSVAGSLSSLQSATSDSEQSFDFLTDWGPRFRKLAELYGASEGPAPLW.

The first 34 residues, 1–34 (MWTSGRMSNAKNWLGLGMSLYFWGLMDLTTTVLS), serve as a signal peptide directing secretion. Residues 35–59 (DTPTPQGELEALLSDKPQSHQRTKR) constitute a propeptide that is removed on maturation. Residues 60–619 (SWVWNQFFVL…AYMLPVSLSR (560 aa)) lie on the Extracellular side of the membrane. Cadherin domains lie at 61-165 (WVWN…EPKF), 166-274 (LDGP…PPRF), 275-389 (PQKH…PPVF), 390-494 (EPGF…APEF), and 494-610 (FPRF…SPEA). Asparagine 261 carries N-linked (GlcNAc...) asparagine glycosylation. N-linked (GlcNAc...) asparagine glycosylation is found at asparagine 420, asparagine 461, and asparagine 542. The helical transmembrane segment at 620–640 (GALIAILACIFVLLVLVLLIL) threads the bilayer. Residues 641–801 (SMRRHRKQPY…GASEGPAPLW (161 aa)) lie on the Cytoplasmic side of the membrane.

In terms of tissue distribution, expressed in placenta, adult brain, and fetal brain.

The protein localises to the cell membrane. In terms of biological role, cadherins are calcium-dependent cell adhesion proteins. They preferentially interact with themselves in a homophilic manner in connecting cells; cadherins may thus contribute to the sorting of heterogeneous cell types. In Homo sapiens (Human), this protein is Cadherin-20 (CDH20).